The sequence spans 157 residues: Crossover junction endodeoxyribonuclease RuvC (157 aa).

Active-site residues include Asp-7, Glu-67, and Asp-139. Residues Asp-7, Glu-67, and Asp-139 each coordinate Mg(2+).

This sequence belongs to the RuvC family. In terms of assembly, homodimer which binds Holliday junction (HJ) DNA. The HJ becomes 2-fold symmetrical on binding to RuvC with unstacked arms; it has a different conformation from HJ DNA in complex with RuvA. In the full resolvosome a probable DNA-RuvA(4)-RuvB(12)-RuvC(2) complex forms which resolves the HJ. It depends on Mg(2+) as a cofactor.

The protein resides in the cytoplasm. It catalyses the reaction Endonucleolytic cleavage at a junction such as a reciprocal single-stranded crossover between two homologous DNA duplexes (Holliday junction).. Its function is as follows. The RuvA-RuvB-RuvC complex processes Holliday junction (HJ) DNA during genetic recombination and DNA repair. Endonuclease that resolves HJ intermediates. Cleaves cruciform DNA by making single-stranded nicks across the HJ at symmetrical positions within the homologous arms, yielding a 5'-phosphate and a 3'-hydroxyl group; requires a central core of homology in the junction. The consensus cleavage sequence is 5'-(A/T)TT(C/G)-3'. Cleavage occurs on the 3'-side of the TT dinucleotide at the point of strand exchange. HJ branch migration catalyzed by RuvA-RuvB allows RuvC to scan DNA until it finds its consensus sequence, where it cleaves and resolves the cruciform DNA. The sequence is that of Crossover junction endodeoxyribonuclease RuvC from Prochlorococcus marinus (strain AS9601).